Reading from the N-terminus, the 432-residue chain is Glutamyl-tRNA reductase (432 aa).

Substrate contacts are provided by residues 55–58 (TCNR), Ser-114, 119–121 (ETQ), and Gln-125. Catalysis depends on Cys-56, which acts as the Nucleophile. 194–199 (GAGEMI) is a binding site for NADP(+).

The protein belongs to the glutamyl-tRNA reductase family. Homodimer.

It catalyses the reaction (S)-4-amino-5-oxopentanoate + tRNA(Glu) + NADP(+) = L-glutamyl-tRNA(Glu) + NADPH + H(+). It participates in porphyrin-containing compound metabolism; protoporphyrin-IX biosynthesis; 5-aminolevulinate from L-glutamyl-tRNA(Glu): step 1/2. Its function is as follows. Catalyzes the NADPH-dependent reduction of glutamyl-tRNA(Glu) to glutamate 1-semialdehyde (GSA). This chain is Glutamyl-tRNA reductase, found in Burkholderia orbicola (strain MC0-3).